Consider the following 430-residue polypeptide: 26S protease regulatory subunit 6A (430 aa).

218–225 (GPPGTGKT) contributes to the ATP binding site.

It belongs to the AAA ATPase family. Component of the 19S proteasome regulatory particle complex. The 26S proteasome consists of a 20S core particle (CP) and two 19S regulatory subunits (RP). The regulatory particle is made of a lid composed of 9 subunits, a base containing 6 ATPases including the PSMC3 homolog rpt-5 and few additional components.

It localises to the cytoplasm. The protein resides in the nucleus. Functionally, component of the 26S proteasome, a multiprotein complex involved in the ATP-dependent degradation of ubiquitinated proteins. This complex plays a key role in the maintenance of protein homeostasis by removing misfolded or damaged proteins, which could impair cellular functions, and by removing proteins whose functions are no longer required. Therefore, the proteasome participates in numerous cellular processes, including cell cycle progression, apoptosis, or DNA damage repair. Belongs to the heterohexameric ring of AAA (ATPases associated with diverse cellular activities) proteins that unfolds ubiquitinated target proteins that are concurrently translocated into a proteolytic chamber and degraded into peptides. This Caenorhabditis elegans protein is 26S protease regulatory subunit 6A.